The primary structure comprises 105 residues: Small ribosomal subunit protein uS17 (105 aa).

This sequence belongs to the universal ribosomal protein uS17 family. In terms of assembly, part of the 30S ribosomal subunit.

One of the primary rRNA binding proteins, it binds specifically to the 5'-end of 16S ribosomal RNA. In Thermus aquaticus, this protein is Small ribosomal subunit protein uS17.